Here is a 160-residue protein sequence, read N- to C-terminus: Endoribonuclease YbeY (160 aa).

The Zn(2+) site is built by His118, His122, and His128.

It belongs to the endoribonuclease YbeY family. It depends on Zn(2+) as a cofactor.

Its subcellular location is the cytoplasm. In terms of biological role, single strand-specific metallo-endoribonuclease involved in late-stage 70S ribosome quality control and in maturation of the 3' terminus of the 16S rRNA. In Treponema pallidum (strain Nichols), this protein is Endoribonuclease YbeY.